The primary structure comprises 687 residues: TWiK family of potassium channels protein 12 (687 aa).

The Cytoplasmic segment spans residues 1-21; it reads MTLFQKLQWFCQLIRLRAYYK. The chain crosses the membrane as a helical span at residues 22-42; sequence FLLLIAYTLFGAWLFRFYELQ. Residues asparagine 53, asparagine 77, and asparagine 98 are each glycosylated (N-linked (GlcNAc...) asparagine). The segment at residues 112–132 is an intramembrane region (pore-forming); it reads WTWTGAMFYAGQLYTTIGYGY. The helical transmembrane segment at 142–162 threads the bilayer; sequence ICTVLYALFGIPCFLMYLKAI. The Cytoplasmic portion of the chain corresponds to 163–212; it reads GKTLSKRLKKIYKRVRRSAFGKFLLPTRVTATKDGFEDPDASAEERKRKP. The chain crosses the membrane as a helical span at residues 213 to 233; that stretch reads FPIPIAIILLIIWICFSASMF. An intramembrane region (pore-forming) is located at residues 242-262; sequence FPSAVYFFIVSISTVGLGDML. A helical transmembrane segment spans residues 270 to 290; the sequence is VFNFLLILFGLALLSMCFELI. At 291–687 the chain is on the cytoplasmic side; it reads TDRIAKWKQK…SKRDAPVNIV (397 aa). Residues 661–687 form a disordered region; sequence SPSTSTSTSMIDSGYDLSKRDAPVNIV. A compositionally biased stretch (basic and acidic residues) spans 677–687; that stretch reads LSKRDAPVNIV.

Belongs to the two pore domain potassium channel (TC 1.A.1.8) family.

Its subcellular location is the membrane. In Caenorhabditis briggsae, this protein is TWiK family of potassium channels protein 12.